The primary structure comprises 369 residues: Peptide chain release factor 2 (369 aa).

Gln252 is subject to N5-methylglutamine.

This sequence belongs to the prokaryotic/mitochondrial release factor family. In terms of processing, methylated by PrmC. Methylation increases the termination efficiency of RF2.

The protein localises to the cytoplasm. Peptide chain release factor 2 directs the termination of translation in response to the peptide chain termination codons UGA and UAA. The chain is Peptide chain release factor 2 from Staphylococcus aureus (strain MRSA252).